Reading from the N-terminus, the 116-residue chain is MQITVMKGKIHRATVTDADLNYEGSLTVDMDLVDAAGMRVYEKVSVVNVNNGARFETYIIEGKRGSGEICLNGAAARLGMKGDKIIIITYAQVEEQELASDYTPKVVHVDEKNRKR.

S25 acts as the Schiff-base intermediate with substrate; via pyruvic acid in catalysis. S25 carries the post-translational modification Pyruvic acid (Ser). Position 57 (T57) interacts with substrate. The active-site Proton donor is Y58. Substrate is bound at residue 73 to 75; sequence GAA.

The protein belongs to the PanD family. As to quaternary structure, heterooctamer of four alpha and four beta subunits. Requires pyruvate as cofactor. Is synthesized initially as an inactive proenzyme, which is activated by self-cleavage at a specific serine bond to produce a beta-subunit with a hydroxyl group at its C-terminus and an alpha-subunit with a pyruvoyl group at its N-terminus.

The protein resides in the cytoplasm. It carries out the reaction L-aspartate + H(+) = beta-alanine + CO2. It participates in cofactor biosynthesis; (R)-pantothenate biosynthesis; beta-alanine from L-aspartate: step 1/1. Catalyzes the pyruvoyl-dependent decarboxylation of aspartate to produce beta-alanine. In Leptospira interrogans serogroup Icterohaemorrhagiae serovar Lai (strain 56601), this protein is Aspartate 1-decarboxylase.